A 1433-amino-acid chain; its full sequence is DNA-directed RNA polymerase subunit beta' (1433 aa).

Positions 66, 68, 81, and 84 each coordinate Zn(2+). Mg(2+)-binding residues include D473, D475, and D477. The Zn(2+) site is built by C815, C889, C896, and C899.

It belongs to the RNA polymerase beta' chain family. The RNAP catalytic core consists of 2 alpha, 1 beta, 1 beta' and 1 omega subunit. When a sigma factor is associated with the core the holoenzyme is formed, which can initiate transcription. Mg(2+) is required as a cofactor. It depends on Zn(2+) as a cofactor.

The catalysed reaction is RNA(n) + a ribonucleoside 5'-triphosphate = RNA(n+1) + diphosphate. Functionally, DNA-dependent RNA polymerase catalyzes the transcription of DNA into RNA using the four ribonucleoside triphosphates as substrates. The chain is DNA-directed RNA polymerase subunit beta' from Porphyromonas gingivalis (strain ATCC BAA-308 / W83).